The following is a 310-amino-acid chain: 4-diphosphocytidyl-2-C-methyl-D-erythritol kinase (310 aa).

Lysine 12 is a catalytic residue. 97-107 is a binding site for ATP; it reads PIGAGLAGGSS. Aspartate 139 is a catalytic residue.

Belongs to the GHMP kinase family. IspE subfamily.

It catalyses the reaction 4-CDP-2-C-methyl-D-erythritol + ATP = 4-CDP-2-C-methyl-D-erythritol 2-phosphate + ADP + H(+). The protein operates within isoprenoid biosynthesis; isopentenyl diphosphate biosynthesis via DXP pathway; isopentenyl diphosphate from 1-deoxy-D-xylulose 5-phosphate: step 3/6. Its function is as follows. Catalyzes the phosphorylation of the position 2 hydroxy group of 4-diphosphocytidyl-2C-methyl-D-erythritol. This Synechococcus sp. (strain CC9311) protein is 4-diphosphocytidyl-2-C-methyl-D-erythritol kinase.